The sequence spans 312 residues: Ribosomal RNA small subunit methyltransferase H (312 aa).

Residues 35–37 (GGH), Asp-55, Phe-85, Asp-101, and Gln-108 each bind S-adenosyl-L-methionine.

It belongs to the methyltransferase superfamily. RsmH family.

The protein localises to the cytoplasm. It carries out the reaction cytidine(1402) in 16S rRNA + S-adenosyl-L-methionine = N(4)-methylcytidine(1402) in 16S rRNA + S-adenosyl-L-homocysteine + H(+). Its function is as follows. Specifically methylates the N4 position of cytidine in position 1402 (C1402) of 16S rRNA. The sequence is that of Ribosomal RNA small subunit methyltransferase H from Buchnera aphidicola subsp. Acyrthosiphon pisum (strain Tuc7).